Consider the following 360-residue polypeptide: DNA replication and repair protein RecF (360 aa).

Glycine 30–threonine 37 is an ATP binding site.

This sequence belongs to the RecF family.

Its subcellular location is the cytoplasm. The RecF protein is involved in DNA metabolism; it is required for DNA replication and normal SOS inducibility. RecF binds preferentially to single-stranded, linear DNA. It also seems to bind ATP. The chain is DNA replication and repair protein RecF from Desulforudis audaxviator (strain MP104C).